The sequence spans 430 residues: MKITINQASEFVGKEVTIGAWLANKRSSGKIAFLQLRDGTGFMQGVVVKAEVGDDIFATAKALTQETSLYVTGTINEDTRSPFGYEMAVSGVEVISESHDYPITPKEHGTEFLMDHRHLWLRSNRQHAIMKIRNEIIRASYEFFNKEGFLKIDPPILTGSAPEGTTELFHTKYFDEDAFLSQSGQLYMEAAAMAFGKVFSFGPTFRAEKSKTRRHLIEFWMIEPEMAFYKLEDSLQVQENYVAFLVKAVLDNCRLELDRLGRDVSHLEKMVAPFPRITYTEAIERLHELGFDDIVWGDDFGAPHETAIADSFEKPVFITHYPKAIKPFYMPEDPENDQVVLCADMIAPEGYGEIIGGSERIHDLETLQARMEDFDLDQEAYSWYLDLARYGSVPHSGFGLGLERTVAWISGTEHVRETIPFPRLLNRLYP.

This sequence belongs to the class-II aminoacyl-tRNA synthetase family. In terms of assembly, homodimer.

Its subcellular location is the cytoplasm. The catalysed reaction is tRNA(Asn) + L-asparagine + ATP = L-asparaginyl-tRNA(Asn) + AMP + diphosphate + H(+). This chain is Asparagine--tRNA ligase, found in Listeria monocytogenes serotype 4b (strain F2365).